The sequence spans 319 residues: MAASRDFLGGFGGEVGGAAVAGEKGGGESDEIELSLGLSLGGCFGADLAREFKKPRLVRSSSIASICSLPGGGGGGAGGDDVATAAPAPAPLMRTSSLPTETEEERWRRREMQSLKRLEAKRKRLERRNSMNSGRSAGAGGGGRDDGQDAMYPTGFQLRRSVVSQGSTSSCMPEQGVGVGAEAMDTSSSDNASCQNKPLPPTASSGGGGGGRPPANGSMKEQPPLRTLRSLTMRTTSTGDLRKSMMEDMPMVSSRVDGPNGRKIDGFLYKYRKREEVRIVCVCHGNFLTPAEFVKHAGGGDVTNPLRHIVVNPSRSVFL.

Disordered regions lie at residues Met-1–Gly-26, Leu-69–Tyr-152, and Ala-181–Arg-234. The span at Pro-70–Gly-79 shows a compositional bias: gly residues. Basic and acidic residues predominate over residues Glu-105–Leu-118. Residues Asp-185–Asn-196 show a composition bias toward polar residues. The span at Leu-225–Arg-234 shows a compositional bias: low complexity.

The protein belongs to the Ninja family.

The protein localises to the nucleus. The chain is Ninja-family protein Os07g0602900 from Oryza sativa subsp. japonica (Rice).